Consider the following 179-residue polypeptide: Large ribosomal subunit protein uL10 (179 aa).

Belongs to the universal ribosomal protein uL10 family. In terms of assembly, part of the ribosomal stalk of the 50S ribosomal subunit. The N-terminus interacts with L11 and the large rRNA to form the base of the stalk. The C-terminus forms an elongated spine to which L12 dimers bind in a sequential fashion forming a multimeric L10(L12)X complex.

Its function is as follows. Forms part of the ribosomal stalk, playing a central role in the interaction of the ribosome with GTP-bound translation factors. In Mycolicibacterium vanbaalenii (strain DSM 7251 / JCM 13017 / BCRC 16820 / KCTC 9966 / NRRL B-24157 / PYR-1) (Mycobacterium vanbaalenii), this protein is Large ribosomal subunit protein uL10.